The chain runs to 375 residues: Trans-enoyl reductase iccB (375 aa).

48–51 lines the NADP(+) pocket; sequence VDAK. 143–150 is a binding site for substrate; that stretch reads AAVATVGL. NADP(+)-binding positions include 204–207, Tyr222, and 269–270; these read SSAS and LD. 289-293 is a substrate binding site; that stretch reads TYSQF. 358–359 lines the NADP(+) pocket; the sequence is IK.

It belongs to the zinc-containing alcohol dehydrogenase family. Monomer.

It catalyses the reaction N-[(4E,6E,10S,12Z,14E)-6,10-dimethyl-3-oxohexadeca-4,6,12,14-tetraenoyl]-L-tyrosyl-[ACP] = (3E,5S)-3-[(2E,4E,8S,10E,12Z)-1-hydroxy-4,8-dimethyltetradeca-2,4,10,12-tetraen-1-ylidene]-5-[(4-hydroxyphenyl)methyl]pyrrolidine-2,4-dione + holo-[ACP] + H(+). Its pathway is mycotoxin biosynthesis. Its function is as follows. Trans-enoyl reductase; part of the gene cluster that mediates the biosynthesis of ilicicolin H, a 4-hydroxy-2-pyridonealkaloid that has potent and broad antifungal activities by inhibiting the mitochondrial respiration chain. IccB collaborates with the hybrid PKS-NRPS synthetase iccA to assemble the backbone of ilicicolin H. The PKS portion of iccA and trans-acting enoyl reductase iccB work together to construct an octaketide, and two methyl groups are introduced by the MT domain of iccA during the chain assembly. The nascent chain is then condensed with tyrosine, catalyzed by the iliA C domain, and the resulting PKS-NRPS hybrid is offloaded by the iliA RED domain to form an advanced tetramic acid intermediate. The biosynthesis of ilicicolin H starts with formation of the tetramic acid by the hybrid PKS-NRPS synthetase iccA with the partnering trans-enoyl reductase iccB since iccA lacks a designated enoylreductase (ER) domain. The cytochrome P450 monooxygenase iccC then catalyzes the ring expansion of the tetramate to the acyclic 2-pyridone. The pericyclase iccD further converts the acyclic 2-pyridone into 8-epi-ilicicolin H. Finally, the epimerase iccE converts 8-epi-ilicicolin H into ilicicolin H via epimerization. IccA to iccE are sufficient for ilicicolin H biosynthesis and the roles of the remaining enzymes, iccF, iccG and iccH within the pathway have still to be determined. The sequence is that of Trans-enoyl reductase iccB from Talaromyces variabilis (Penicillium variabile).